The chain runs to 352 residues: Cobalt transport protein NhlF (352 aa).

Transmembrane regions (helical) follow at residues 23-43 (LASV…LYLG), 46-66 (GNPA…VLGV), 95-115 (VGFF…LVVA), 131-151 (EIGG…VAGL), 206-226 (PVGL…LLTL), 230-250 (AATG…LFAA), 290-310 (VIGL…LPMF), and 323-343 (FEFL…GALL).

This sequence belongs to the NiCoT transporter (TC 2.A.52) family.

The protein localises to the cell membrane. Cobalt uptake is inhibited by uncouplers (CCCP and 3,5-di-tert-butyl-4-hydroxybenzylidenemalononitrile) and by the addition of excess nickel. Mediates energy-dependent uptake of cobalt ions into the cell. Can also transport nickel ions, but cobalt is the preferred substrate. The protein is Cobalt transport protein NhlF (nhlF) of Rhodococcus rhodochrous.